We begin with the raw amino-acid sequence, 90 residues long: MAHHKSAKKRIRQTERRTEVNRARVSRIRTYVKKVELAIAGGDSAAAQAALQEAQPELMKGAQAGILHKNTASRKVSRLVARVKEMKSLA.

Over residues 1-11 the composition is skewed to basic residues; that stretch reads MAHHKSAKKRI. The tract at residues 1–22 is disordered; sequence MAHHKSAKKRIRQTERRTEVNR. The segment covering 12 to 22 has biased composition (basic and acidic residues); it reads RQTERRTEVNR.

It belongs to the bacterial ribosomal protein bS20 family.

Its function is as follows. Binds directly to 16S ribosomal RNA. The protein is Small ribosomal subunit protein bS20 of Paramagnetospirillum magneticum (strain ATCC 700264 / AMB-1) (Magnetospirillum magneticum).